A 127-amino-acid chain; its full sequence is 3-aminoacrylate deaminase RutC (127 aa).

This sequence belongs to the RutC family.

The catalysed reaction is (Z)-3-aminoacrylate + H2O + H(+) = 3-oxopropanoate + NH4(+). Its function is as follows. Involved in pyrimidine catabolism. Catalyzes the deamination of 3-aminoacrylate to malonic semialdehyde, a reaction that can also occur spontaneously. RutC may facilitate the reaction and modulate the metabolic fitness, rather than catalyzing essential functions. This Pseudomonas syringae pv. syringae (strain B728a) protein is 3-aminoacrylate deaminase RutC.